A 200-amino-acid chain; its full sequence is NADH-quinone oxidoreductase subunit C (200 aa).

Belongs to the complex I 30 kDa subunit family. As to quaternary structure, NDH-1 is composed of 14 different subunits. Subunits NuoB, C, D, E, F, and G constitute the peripheral sector of the complex.

It localises to the cell inner membrane. It catalyses the reaction a quinone + NADH + 5 H(+)(in) = a quinol + NAD(+) + 4 H(+)(out). NDH-1 shuttles electrons from NADH, via FMN and iron-sulfur (Fe-S) centers, to quinones in the respiratory chain. The immediate electron acceptor for the enzyme in this species is believed to be ubiquinone. Couples the redox reaction to proton translocation (for every two electrons transferred, four hydrogen ions are translocated across the cytoplasmic membrane), and thus conserves the redox energy in a proton gradient. In Rhizobium leguminosarum bv. trifolii (strain WSM2304), this protein is NADH-quinone oxidoreductase subunit C.